The sequence spans 459 residues: V-type ATP synthase beta chain (459 aa).

This sequence belongs to the ATPase alpha/beta chains family.

Its function is as follows. Produces ATP from ADP in the presence of a proton gradient across the membrane. The V-type beta chain is a regulatory subunit. In Thermoanaerobacter sp. (strain X514), this protein is V-type ATP synthase beta chain.